Reading from the N-terminus, the 175-residue chain is NADH-ubiquinone oxidoreductase chain 6 (175 aa).

5 helical membrane passes run 1 to 21 (MMYMVFLLSVAFVISFIGFSS), 26 to 46 (IYGGLGLIVGGGVGCGIVMGL), 47 to 67 (GGSFLGLMVFLVYLGGMLVVF), 87 to 107 (VILSALFVGLLVEVAMIVWMI), and 152 to 172 (WLVILAGWSLFVSIFIVIEIT).

This sequence belongs to the complex I subunit 6 family.

The protein localises to the mitochondrion membrane. It carries out the reaction a ubiquinone + NADH + 5 H(+)(in) = a ubiquinol + NAD(+) + 4 H(+)(out). Functionally, core subunit of the mitochondrial membrane respiratory chain NADH dehydrogenase (Complex I) that is believed to belong to the minimal assembly required for catalysis. Complex I functions in the transfer of electrons from NADH to the respiratory chain. The immediate electron acceptor for the enzyme is believed to be ubiquinone. The chain is NADH-ubiquinone oxidoreductase chain 6 (MT-ND6) from Dasypus novemcinctus (Nine-banded armadillo).